The sequence spans 157 residues: Transcription inhibitor protein Gfh1 (157 aa).

The stretch at 1–74 forms a coiled coil; it reads MAREVKLTKA…LEDVLSRAVI (74 aa).

Belongs to the GreA/GreB family. As to quaternary structure, interacts with RNAP.

Inhibits all catalytic activities of RNA polymerase (RNAP) by partially occluding its substrate-binding site and preventing NTP binding. This is Transcription inhibitor protein Gfh1 (gfh1) from Thermus aquaticus.